The chain runs to 501 residues: Cytochrome P450 71D6 (501 aa).

Cys-442 contacts heme.

Belongs to the cytochrome P450 family. Heme is required as a cofactor.

In Solanum chacoense (Chaco potato), this protein is Cytochrome P450 71D6 (CYP71D6).